The chain runs to 452 residues: Isocitrate dehydrogenase [NADP], mitochondrial (452 aa).

The transit peptide at 1–39 (MAGYLRAVSSLCRASGSTRTWAPAALNVPSWPEQPRRHY) directs the protein to the mitochondrion. Residues lysine 45, lysine 48, lysine 67, and lysine 69 each carry the N6-acetyllysine modification. An N6-acetyllysine; alternate mark is found at lysine 80 and lysine 106. An N6-succinyllysine; alternate mark is found at lysine 80 and lysine 106. Residues 115-117 (TIT) and arginine 122 contribute to the NADP(+) site. Threonine 117 serves as a coordination point for D-threo-isocitrate. D-threo-isocitrate-binding positions include 134 to 140 (SPNGTIR) and arginine 149. An N6-acetyllysine modification is found at lysine 155. Lysine 166 carries the N6-acetyllysine; alternate modification. Lysine 166 carries the post-translational modification N6-succinyllysine; alternate. Arginine 172 lines the D-threo-isocitrate pocket. Residues lysine 180 and lysine 193 each carry the N6-acetyllysine; alternate modification. Lysine 180 and lysine 193 each carry N6-succinyllysine; alternate. Lysine 199 is modified (N6-acetyllysine). Position 256 is an N6-acetyllysine; alternate (lysine 256). N6-succinyllysine; alternate is present on lysine 256. Lysine 263, lysine 272, lysine 275, and lysine 280 each carry N6-acetyllysine. Lysine 282 is subject to N6-acetyllysine; alternate. At lysine 282 the chain carries N6-succinyllysine; alternate. Aspartate 291 serves as a coordination point for Mn(2+). Lysine 299 is an NADP(+) binding site. Residue aspartate 314 participates in Mn(2+) binding. Residues 349 to 354 (GTVTRH) and asparagine 367 contribute to the NADP(+) site. At lysine 384 the chain carries N6-acetyllysine; alternate. An N6-succinyllysine; alternate modification is found at lysine 384. 3 positions are modified to N6-acetyllysine: lysine 400, lysine 413, and lysine 442.

The protein belongs to the isocitrate and isopropylmalate dehydrogenases family. In terms of assembly, homodimer. Requires Mg(2+) as cofactor. Mn(2+) serves as cofactor. Acetylation at Lys-413 dramatically reduces catalytic activity. Deacetylated by SIRT3.

It is found in the mitochondrion. It carries out the reaction D-threo-isocitrate + NADP(+) = 2-oxoglutarate + CO2 + NADPH. Functionally, plays a role in intermediary metabolism and energy production. It may tightly associate or interact with the pyruvate dehydrogenase complex. The chain is Isocitrate dehydrogenase [NADP], mitochondrial (Idh2) from Rattus norvegicus (Rat).